A 388-amino-acid polypeptide reads, in one-letter code: Dual-specificity RNA methyltransferase RlmN (388 aa).

The active-site Proton acceptor is E109. One can recognise a Radical SAM core domain in the interval 115-354 (EDDRATLCVS…TIVRKTRGDD (240 aa)). The cysteines at positions 122 and 359 are disulfide-linked. 3 residues coordinate [4Fe-4S] cluster: C129, C133, and C136. S-adenosyl-L-methionine contacts are provided by residues 183 to 184 (GE), S215, 237 to 239 (SLH), and N316. Catalysis depends on C359, which acts as the S-methylcysteine intermediate.

The protein belongs to the radical SAM superfamily. RlmN family. Requires [4Fe-4S] cluster as cofactor.

It is found in the cytoplasm. It catalyses the reaction adenosine(2503) in 23S rRNA + 2 reduced [2Fe-2S]-[ferredoxin] + 2 S-adenosyl-L-methionine = 2-methyladenosine(2503) in 23S rRNA + 5'-deoxyadenosine + L-methionine + 2 oxidized [2Fe-2S]-[ferredoxin] + S-adenosyl-L-homocysteine. The catalysed reaction is adenosine(37) in tRNA + 2 reduced [2Fe-2S]-[ferredoxin] + 2 S-adenosyl-L-methionine = 2-methyladenosine(37) in tRNA + 5'-deoxyadenosine + L-methionine + 2 oxidized [2Fe-2S]-[ferredoxin] + S-adenosyl-L-homocysteine. Specifically methylates position 2 of adenine 2503 in 23S rRNA and position 2 of adenine 37 in tRNAs. m2A2503 modification seems to play a crucial role in the proofreading step occurring at the peptidyl transferase center and thus would serve to optimize ribosomal fidelity. This Cronobacter sakazakii (strain ATCC BAA-894) (Enterobacter sakazakii) protein is Dual-specificity RNA methyltransferase RlmN.